A 509-amino-acid chain; its full sequence is DEAD-box ATP-dependent RNA helicase CshA (509 aa).

Residues 2 to 30 (QNFKELGISDKTVQTLEAMGFKEPTPIQK) carry the Q motif motif. One can recognise a Helicase ATP-binding domain in the interval 33–203 (IPYALEGDDI…QQFMKAPKII (171 aa)). 46-53 (AQTGTGKT) is a binding site for ATP. The DEAD box signature appears at 150 to 153 (DEAD). The region spanning 214 to 375 (QIDEYYTIVK…LRPPHRKEVL (162 aa)) is the Helicase C-terminal domain. Basic residues-rich tracts occupy residues 440–459 (ARKNRSSKGGSRRSNHKRGN) and 467–482 (RRSKGSKGQSSKKKNQ). Residues 440-509 (ARKNRSSKGG…KGRTFADHQK (70 aa)) form a disordered region. Residues 483 to 492 (KKFDRRDKQQ) show a composition bias toward basic and acidic residues.

The protein belongs to the DEAD box helicase family. CshA subfamily. Oligomerizes, may be a member of the RNA degradosome.

It localises to the cytoplasm. The enzyme catalyses ATP + H2O = ADP + phosphate + H(+). In terms of biological role, DEAD-box RNA helicase possibly involved in RNA degradation. Unwinds dsRNA in both 5'- and 3'-directions, has RNA-dependent ATPase activity. This chain is DEAD-box ATP-dependent RNA helicase CshA, found in Staphylococcus epidermidis (strain ATCC 35984 / DSM 28319 / BCRC 17069 / CCUG 31568 / BM 3577 / RP62A).